The primary structure comprises 207 residues: Shikimate kinase (207 aa).

ATP is bound at residue 32–37; the sequence is GVGKST. A Mg(2+)-binding site is contributed by serine 36. Aspartate 54, arginine 78, and glycine 100 together coordinate substrate. Arginine 138 contributes to the ATP binding site. Arginine 157 is a binding site for substrate.

The protein belongs to the shikimate kinase family. In terms of assembly, monomer. Requires Mg(2+) as cofactor.

The protein resides in the cytoplasm. The enzyme catalyses shikimate + ATP = 3-phosphoshikimate + ADP + H(+). Its pathway is metabolic intermediate biosynthesis; chorismate biosynthesis; chorismate from D-erythrose 4-phosphate and phosphoenolpyruvate: step 5/7. Its function is as follows. Catalyzes the specific phosphorylation of the 3-hydroxyl group of shikimic acid using ATP as a cosubstrate. The chain is Shikimate kinase from Bradyrhizobium diazoefficiens (strain JCM 10833 / BCRC 13528 / IAM 13628 / NBRC 14792 / USDA 110).